The primary structure comprises 188 residues: Pyridoxal 5'-phosphate synthase subunit PdxT (188 aa).

46–48 (GES) lines the L-glutamine pocket. The active-site Nucleophile is the cysteine 78. L-glutamine-binding positions include arginine 105 and 134-135 (IR). Catalysis depends on charge relay system residues histidine 170 and glutamate 172.

Belongs to the glutaminase PdxT/SNO family. In the presence of PdxS, forms a dodecamer of heterodimers. Only shows activity in the heterodimer.

It carries out the reaction aldehydo-D-ribose 5-phosphate + D-glyceraldehyde 3-phosphate + L-glutamine = pyridoxal 5'-phosphate + L-glutamate + phosphate + 3 H2O + H(+). It catalyses the reaction L-glutamine + H2O = L-glutamate + NH4(+). It participates in cofactor biosynthesis; pyridoxal 5'-phosphate biosynthesis. Its function is as follows. Catalyzes the hydrolysis of glutamine to glutamate and ammonia as part of the biosynthesis of pyridoxal 5'-phosphate. The resulting ammonia molecule is channeled to the active site of PdxS. This is Pyridoxal 5'-phosphate synthase subunit PdxT from Clostridium kluyveri (strain ATCC 8527 / DSM 555 / NBRC 12016 / NCIMB 10680 / K1).